We begin with the raw amino-acid sequence, 77 residues long: Apelin (77 aa).

The first 22 residues, 1 to 22, serve as a signal peptide directing secretion; the sequence is MNVKILTLVIVLVVSLLCSASA. Positions 21–77 are disordered; the sequence is SAGPMASTEHSKEIEEVGSMRTPLRQNPARAGRSQRPAGWRRRRPRPRLSHKGPMPF. Positions 59–71 are enriched in basic residues; it reads GWRRRRPRPRLSH.

This sequence belongs to the apelin family.

The protein localises to the secreted. The protein resides in the extracellular space. Peptide hormone that functions as endogenous ligand for the G-protein-coupled apelin receptor (aplnra and/or aplnrb), that plays a role in cadiovascular homeostasis. Functions as a balanced agonist activating both G(i) protein pathway and beta-arrestin pathway of APLNR. Downstream G proteins activation, apelin can inhibit cAMP production and activate key intracellular effectors such as ERKs. On the other hand, APLNR activation induces beta-arrestin recruitment to the membrane leading to desensitization and internalization of the receptor. Apelin blunts cardiac hypertrophic induction from APLNR on response to pathological stimuli, but also induces myocardial hypertrophy under normal conditions. Involved in the regulation of cardiac precursor cell movements during gastrulation and heart morphogenesis. Plays a role in early coronary blood vessels formation. Mediates myocardial contractility in an ERK1/2-dependent manner. May also have a role in the central control of body fluid homeostasis. The sequence is that of Apelin from Danio rerio (Zebrafish).